The sequence spans 285 residues: Bifunctional protein FolD (285 aa).

NADP(+)-binding positions include 166–168, serine 191, and isoleucine 232; that span reads GRS.

Belongs to the tetrahydrofolate dehydrogenase/cyclohydrolase family. Homodimer.

It carries out the reaction (6R)-5,10-methylene-5,6,7,8-tetrahydrofolate + NADP(+) = (6R)-5,10-methenyltetrahydrofolate + NADPH. It catalyses the reaction (6R)-5,10-methenyltetrahydrofolate + H2O = (6R)-10-formyltetrahydrofolate + H(+). It participates in one-carbon metabolism; tetrahydrofolate interconversion. Functionally, catalyzes the oxidation of 5,10-methylenetetrahydrofolate to 5,10-methenyltetrahydrofolate and then the hydrolysis of 5,10-methenyltetrahydrofolate to 10-formyltetrahydrofolate. The chain is Bifunctional protein FolD from Rickettsia typhi (strain ATCC VR-144 / Wilmington).